The primary structure comprises 387 residues: Patatin-08 (387 aa).

The first 23 residues, 1 to 23, serve as a signal peptide directing secretion; it reads MATTKSFLILIVMILATTSSTFA. A PNPLA domain is found at 32–230; that stretch reads LSIDGGGIKG…TVADPALLSI (199 aa). Positions 36 to 41 match the GXGXXG motif; sequence GGGIKG. Residues 75-79 carry the GXSXG motif; it reads GTSTG. The Nucleophile role is filled by serine 77. N-linked (GlcNAc...) asparagine glycosylation is present at asparagine 115. The Proton acceptor role is filled by aspartate 216. Positions 216–218 match the DGA/G motif; it reads DGA. Positions 361 to 385 form a coiled coil; that stretch reads ETYEEALKRFAKLLSDRKKLRANKA.

The protein belongs to the patatin family. As to expression, tuber.

It localises to the vacuole. Functionally, probable lipolytic acyl hydrolase (LAH), an activity which is thought to be involved in the response of tubers to pathogens. This chain is Patatin-08, found in Solanum tuberosum (Potato).